The following is a 207-amino-acid chain: ATP-dependent Clp protease proteolytic subunit (207 aa).

S112 acts as the Nucleophile in catalysis. Residue H137 is part of the active site.

Belongs to the peptidase S14 family. As to quaternary structure, fourteen ClpP subunits assemble into 2 heptameric rings which stack back to back to give a disk-like structure with a central cavity, resembling the structure of eukaryotic proteasomes.

The protein localises to the cytoplasm. The enzyme catalyses Hydrolysis of proteins to small peptides in the presence of ATP and magnesium. alpha-casein is the usual test substrate. In the absence of ATP, only oligopeptides shorter than five residues are hydrolyzed (such as succinyl-Leu-Tyr-|-NHMec, and Leu-Tyr-Leu-|-Tyr-Trp, in which cleavage of the -Tyr-|-Leu- and -Tyr-|-Trp bonds also occurs).. Its function is as follows. Cleaves peptides in various proteins in a process that requires ATP hydrolysis. Has a chymotrypsin-like activity. Plays a major role in the degradation of misfolded proteins. The polypeptide is ATP-dependent Clp protease proteolytic subunit (Bacteroides fragilis (strain ATCC 25285 / DSM 2151 / CCUG 4856 / JCM 11019 / LMG 10263 / NCTC 9343 / Onslow / VPI 2553 / EN-2)).